Here is a 66-residue protein sequence, read N- to C-terminus: Large ribosomal subunit protein bL35 (66 aa).

This sequence belongs to the bacterial ribosomal protein bL35 family.

The polypeptide is Large ribosomal subunit protein bL35 (Borreliella afzelii (strain PKo) (Borrelia afzelii)).